Here is a 1481-residue protein sequence, read N- to C-terminus: MQKSPLVKASVISKLFFSWTRPILKKGYRKRLEVSDIYQVPSADSADNLSEELEREWDRELASKKNPKLINALRRCFLWRFIFYGILLYLGEVTKAVQPLLLGRIIASYDPDNKEERSIAIYLAIGLCLLFIVRTLLLHPAIFGLQHIGMQMRIAMFSLIYKKTLKLSSRVLDKISIGQLVSLLSNNLNKFDEGLALAHFVWIAPLQVTLLMGLLWDLLQASAFCGLAVLIVLALFQAWLGKMMMKYRDQRAGKINERLVITSEMIENIQSVKAYCWEEAMEKMIENLRQTELKLTRKAAYMRYFNSAAFFFSGFFVVFLSVLPYAFLQGIILRKIFTTISFCIVLRMAITRQFPGAVQTWYDSLGAINKIQDFLQKQEYKTLEYNLTTTEVVMENVTAFWEEQGFGELLEKAKLNNNNRKISNGDNKLFFSNFSLLGSPVLKDINFKIEKGQLLAVAGSTGAGKTSLLMMILGELEPSEGKIKHSGRVSFCSQFSWIMPGTIKENIIFGVSYDEYRYRSVIKACQLEEDISKFAEKDNIVLGEGGITLSGGQRARISLARAVYKDADLYLLDSPFGYLDVLTEKQIFESCVCKLMANKTRILVTSKMEHLKKADKILILHEGSSYFYGTFSELQNLRPDFSSKLMGYDSFDQFSAERRNSILTETLRRFSLEGDPSVSFNETKKQSFKQTGEFGEKRKNSILNSINSIRKFSIVPKTPLQISGIEEDSDDPVERRLSLVPDSEQSDGLLLRSNVIHTGPTFQGSRRQSVLNLITHSVNQGQSFRRTTTAPSRKMSLAPQASLTEMDIYSRRLSQDSSLEINEEINEEDLKECFFDDVENIPTVTTWNTYLRYITVHKSLILVLIWCLIIFLAEVAASLVVLWLLKNNTPQQEMNSTQSGNRSYPVIITNTSFYYIFYIYVGVADTLLALGLFRGLPLVHTLITVSKILHHKMLRSVLQAPMSTLNALKAGGILNRFSKDIAILDDLLPLTIFDFIQLLLIVIGAIAVVSVLQPYIFLATVPVIAAFIMLRAYFLHTSQQLKQLESEGRSPIFTHLVTSLKGLWTLRAFGRQPYFETLFHKALNLHTANWFLYLSTLRWFQMRIEMIFVIFFIAVTFISILTTGEGQGSVGIILTLAMNIMSTLQWAVNSSIDVDSLMRSVSRVFKFIDMPEEGAPVKSIKPSRDDQLSKVMIIENQHVKKDDIWPSGGQMIVKDLTAKYVDGGIAILENISFSISPGQRVGLLGRTGSGKSTLLSAFLRLLNTEGEIQIDGVSWDSTPLQQWRKAFGVIPQKVFIFSGTFRKNLDPFGQWSDQEIWKVADEVGLRSVIEQFPGKLDFVLVDGGYVLSHGHKQLMCLARSVLSKAKILLLDEPSAHLDPITYQIIRRTIKQAFADCTVILCEHRIEAMLECQRFLVIEENKVRQYDSIQKLLSEKSLFRQAISSSDRLKLFPHRNSSKHKSRSQITALKEETEEEVQETRL.

At 1–77 (MQKSPLVKAS…KLINALRRCF (77 aa)) the chain is on the cytoplasmic side. A helical membrane pass occupies residues 78–98 (LWRFIFYGILLYLGEVTKAVQ). Positions 81–365 (FIFYGILLYL…GAVQTWYDSL (285 aa)) constitute an ABC transmembrane type-1 1 domain. The Extracellular portion of the chain corresponds to 99–122 (PLLLGRIIASYDPDNKEERSIAIY). A helical membrane pass occupies residues 123-146 (LAIGLCLLFIVRTLLLHPAIFGLQ). At 147–195 (HIGMQMRIAMFSLIYKKTLKLSSRVLDKISIGQLVSLLSNNLNKFDEGL) the chain is on the cytoplasmic side. The chain crosses the membrane as a helical span at residues 196-216 (ALAHFVWIAPLQVTLLMGLLW). Over 217–222 (DLLQAS) the chain is Extracellular. A helical transmembrane segment spans residues 223–243 (AFCGLAVLIVLALFQAWLGKM). Topologically, residues 244 to 298 (MMKYRDQRAGKINERLVITSEMIENIQSVKAYCWEEAMEKMIENLRQTELKLTRK) are cytoplasmic. The chain crosses the membrane as a helical span at residues 299–319 (AAYMRYFNSAAFFFSGFFVVF). The Extracellular portion of the chain corresponds to 320-339 (LSVLPYAFLQGIILRKIFTT). A helical transmembrane segment spans residues 340-358 (ISFCIVLRMAITRQFPGAV). Topologically, residues 359–859 (QTWYDSLGAI…YLRYITVHKS (501 aa)) are cytoplasmic. Residues Trp401, Ser435, 459–466 (GSTGAGKT), and Gln494 contribute to the ATP site. The 224-residue stretch at 424–647 (NGDNKLFFSN…RPDFSSKLMG (224 aa)) folds into the ABC transporter 1 domain. A lipid anchor (S-palmitoyl cysteine) is attached at Cys525. Position 550 is a phosphoserine (Ser550). Residues 655 to 832 (SAERRNSILT…EEINEEDLKE (178 aa)) form a disordered R region region. Ser661 and Ser671 each carry phosphoserine; by PKA. A Phosphoserine; by PKC modification is found at Ser687. Lys689 is covalently cross-linked (Glycyl lysine isopeptide (Lys-Gly) (interchain with G-Cter in ubiquitin)). A phosphoserine; by PKA mark is found at Ser701 and Ser713. Residue Thr718 is modified to Phosphothreonine. 4 positions are modified to phosphoserine; by PKA: Ser738, Ser769, Ser796, and Ser814. Residues 860-880 (LILVLIWCLIIFLAEVAASLV) traverse the membrane as a helical segment. Residues 860-1156 (LILVLIWCLI…AVNSSIDVDS (297 aa)) enclose the ABC transmembrane type-1 2 domain. The Extracellular portion of the chain corresponds to 881–919 (VLWLLKNNTPQQEMNSTQSGNRSYPVIITNTSFYYIFYI). N-linked (GlcNAc...) asparagine glycans are attached at residues Asn895 and Asn901. The chain crosses the membrane as a discontinuously helical span at residues 920–940 (YVGVADTLLALGLFRGLPLVH). Residues 941–991 (TLITVSKILHHKMLRSVLQAPMSTLNALKAGGILNRFSKDIAILDDLLPLT) are Cytoplasmic-facing. The helical transmembrane segment at 992 to 1012 (IFDFIQLLLIVIGAIAVVSVL) threads the bilayer. Residues 1013 to 1014 (QP) are Extracellular-facing. The helical transmembrane segment at 1015–1035 (YIFLATVPVIAAFIMLRAYFL) threads the bilayer. The Cytoplasmic segment spans residues 1036 to 1096 (HTSQQLKQLE…TANWFLYLST (61 aa)). The helical transmembrane segment at 1097 to 1117 (LRWFQMRIEMIFVIFFIAVTF) threads the bilayer. Residues 1118-1131 (ISILTTGEGQGSVG) are Extracellular-facing. Residues 1132-1152 (IILTLAMNIMSTLQWAVNSSI) traverse the membrane as a helical segment. The Cytoplasmic portion of the chain corresponds to 1153-1481 (DVDSLMRSVS…TEEEVQETRL (329 aa)). Residues 1211–1444 (MIVKDLTAKY…KSLFRQAISS (234 aa)) enclose the ABC transporter 2 domain. ATP is bound by residues Tyr1220 and 1245 to 1252 (GRTGSGKS). The tract at residues 1387 to 1481 (RTIKQAFADC…TEEEVQETRL (95 aa)) is interaction with GORASP2. The S-palmitoyl cysteine moiety is linked to residue Cys1396. Phosphoserine is present on residues Ser1445 and Ser1457. Residues 1453-1462 (HRNSSKHKSR) show a composition bias toward basic residues. Residues 1453-1481 (HRNSSKHKSRSQITALKEETEEEVQETRL) form a disordered region. A compositionally biased stretch (acidic residues) spans 1471-1481 (ETEEEVQETRL). The PDZ-binding signature appears at 1479–1481 (TRL).

It belongs to the ABC transporter superfamily. ABCC family. CFTR transporter (TC 3.A.1.202) subfamily. Monomer; does not require oligomerization for channel activity. May form oligomers in the membrane. Interacts with SLC26A3, SLC26A6 and NHERF1. Interacts with SHANK2. Interacts with MYO6. Interacts (via C-terminus) with GOPC (via PDZ domain); this promotes CFTR internalization and thereby decreases channel activity. Interacts with SLC4A7 through NHERF1. Found in a complex with MYO5B and RAB11A. Interacts with ANO1. Interacts with SLC26A8. Interacts with AHCYL1; the interaction increases CFTR activity. Interacts with CSE1L. The core-glycosylated form interacts with GORASP2 (via PDZ GRASP-type 1 domain) in respone to ER stress. Interacts with MARCHF2; the interaction leads to CFTR ubiqtuitination and degradation. Interacts with ADGRG2. Post-translationally, N-glycosylated. Phosphorylated; cAMP treatment promotes phosphorylation and activates the channel. Dephosphorylation decreases the ATPase activity (in vitro). Phosphorylation at PKA sites activates the channel. Phosphorylation at PKC sites enhances the response to phosphorylation by PKA. Phosphorylated by AMPK; this inhibits channel activity. In terms of processing, ubiquitinated, leading to its degradation in the lysosome. Deubiquitination by USP10 in early endosomes enhances its endocytic recycling to the cell membrane. Ubiquitinated by RNF185 during ER stress. Ubiquitinated by MARCHF2.

It is found in the apical cell membrane. The protein resides in the early endosome membrane. It localises to the cell membrane. Its subcellular location is the recycling endosome membrane. The protein localises to the endoplasmic reticulum membrane. It is found in the nucleus. The enzyme catalyses ATP + H2O + closed Cl(-) channel = ADP + phosphate + open Cl(-) channel.. It catalyses the reaction chloride(in) = chloride(out). It carries out the reaction hydrogencarbonate(in) = hydrogencarbonate(out). The catalysed reaction is ATP + H2O = ADP + phosphate + H(+). Its function is as follows. Epithelial ion channel that plays an important role in the regulation of epithelial ion and water transport and fluid homeostasis. Mediates the transport of chloride ions across the cell membrane. Possesses an intrinsic ATPase activity and utilizes ATP to gate its channel; the passive flow of anions through the channel is gated by cycles of ATP binding and hydrolysis by the ATP-binding domains. The ion channel is also permeable to HCO(3)(-); selectivity depends on the extracellular chloride concentration. Exerts its function also by modulating the activity of other ion channels and transporters. Contributes to the regulation of the pH and the ion content of the epithelial fluid layer. Modulates the activity of the epithelial sodium channel (ENaC) complex, in part by regulating the cell surface expression of the ENaC complex. May regulate bicarbonate secretion and salvage in epithelial cells by regulating the transporter SLC4A7. Can inhibit the chloride channel activity of ANO1. Plays a role in the chloride and bicarbonate homeostasis during sperm epididymal maturation and capacitation. The protein is Cystic fibrosis transmembrane conductance regulator of Cavia porcellus (Guinea pig).